We begin with the raw amino-acid sequence, 230 residues long: ATP synthase subunit a 1 (230 aa).

Helical transmembrane passes span 20–40 (ATIV…WLIT), 78–98 (FLPF…LTIF), 112–132 (AALA…NVGI), 174–194 (LLVA…MTLF), and 195–215 (GLLV…VYIA).

This sequence belongs to the ATPase A chain family. As to quaternary structure, F-type ATPases have 2 components, CF(1) - the catalytic core - and CF(0) - the membrane proton channel. CF(1) has five subunits: alpha(3), beta(3), gamma(1), delta(1), epsilon(1). CF(0) has four main subunits: a, b, b' and c.

It is found in the cellular thylakoid membrane. Key component of the proton channel; it plays a direct role in the translocation of protons across the membrane. The chain is ATP synthase subunit a 1 from Crocosphaera subtropica (strain ATCC 51142 / BH68) (Cyanothece sp. (strain ATCC 51142)).